An 890-amino-acid polypeptide reads, in one-letter code: Translation initiation factor IF-2 (890 aa).

The tract at residues 45-302 (LIDHLNQKNS…SSLQQGFQKP (258 aa)) is disordered. The span at 67–81 (STLNIPSTGGKSKSV) shows a compositional bias: polar residues. Residues 92-217 (VKRDPQEAER…RMAEENKWTD (126 aa)) are compositionally biased toward basic and acidic residues. Over residues 252-266 (GRGRNAKAARPKKGN) the composition is skewed to basic residues. Residues 267–280 (KHAESKADREEARA) are compositionally biased toward basic and acidic residues. Residues 389 to 558 (PRAPVVTIMG…LLQAEVLELK (170 aa)) enclose the tr-type G domain. The segment at 398–405 (GHVDHGKT) is G1. 398-405 (GHVDHGKT) provides a ligand contact to GTP. Residues 423-427 (GITQH) form a G2 region. Residues 444-447 (DTPG) form a G3 region. Residues 444-448 (DTPGH) and 498-501 (NKID) contribute to the GTP site. Residues 498-501 (NKID) are G4. The segment at 534 to 536 (SAK) is G5. N6-acetyllysine is present on lysine 808.

This sequence belongs to the TRAFAC class translation factor GTPase superfamily. Classic translation factor GTPase family. IF-2 subfamily.

It is found in the cytoplasm. Functionally, one of the essential components for the initiation of protein synthesis. Protects formylmethionyl-tRNA from spontaneous hydrolysis and promotes its binding to the 30S ribosomal subunits. Also involved in the hydrolysis of GTP during the formation of the 70S ribosomal complex. This is Translation initiation factor IF-2 from Shigella dysenteriae serotype 1 (strain Sd197).